We begin with the raw amino-acid sequence, 689 residues long: Glycine--tRNA ligase beta subunit (689 aa).

The protein belongs to the class-II aminoacyl-tRNA synthetase family. Tetramer of two alpha and two beta subunits.

The protein localises to the cytoplasm. The catalysed reaction is tRNA(Gly) + glycine + ATP = glycyl-tRNA(Gly) + AMP + diphosphate. This Serratia proteamaculans (strain 568) protein is Glycine--tRNA ligase beta subunit.